Here is a 284-residue protein sequence, read N- to C-terminus: MEMO1 family protein LS215_2219 (284 aa).

Belongs to the MEMO1 family.

The sequence is that of MEMO1 family protein LS215_2219 from Saccharolobus islandicus (strain L.S.2.15 / Lassen #1) (Sulfolobus islandicus).